Consider the following 76-residue polypeptide: Protein RALF-like 30 (76 aa).

A signal peptide spans 1–22 (MKAWVICLMVISIFMMIEPTLA). Cystine bridges form between Cys-37-Cys-46 and Cys-66-Cys-72.

This sequence belongs to the plant rapid alkalinization factor (RALF) family.

Its subcellular location is the secreted. In terms of biological role, cell signaling peptide that may regulate plant stress, growth, and development. Mediates a rapid alkalinization of extracellular space by mediating a transient increase in the cytoplasmic Ca(2+) concentration leading to a calcium-dependent signaling events through a cell surface receptor and a concomitant activation of some intracellular mitogen-activated protein kinases. The sequence is that of Protein RALF-like 30 (RALFL30) from Arabidopsis thaliana (Mouse-ear cress).